We begin with the raw amino-acid sequence, 364 residues long: Appendage-associated protein (364 aa).

Coiled-coil stretches lie at residues 142-196 and 288-313; these read IIHE…AECR and RIAQ…ALGK.

The protein localises to the secreted. Functionally, associates with actin filament appendages that are formed in the inclusion appendages of the parasitophorous vacuole during infection of the host erythrocyte. The protein is Appendage-associated protein of Anaplasma marginale (strain Illinois).